We begin with the raw amino-acid sequence, 269 residues long: Lipid II flippase Amj (269 aa).

The next 7 helical transmembrane spans lie at 1–21 (MHVITTQVLFIFCFLLLIHSI), 31–51 (SGARVGFIASALSLFNVMVIV), 84–104 (FLIFGSTVGTILGIILLPSFV), 105–125 (ALFSRAIIHLAGGGGSVFQVF), 161–181 (LFVINMLITSIYTIGVLSALY), 192–212 (TAVMASGLINGIATMLLAIFV), and 245–265 (VAGTLLAQLMFIPGAYYIAWL).

Belongs to the Amj family.

The protein localises to the cell membrane. Its pathway is cell wall biogenesis; peptidoglycan biosynthesis. Involved in peptidoglycan biosynthesis. Transports lipid-linked peptidoglycan precursors from the inner to the outer leaflet of the cytoplasmic membrane. May serve as a defense mechanism against naturally occurring MurJ antagonists. The polypeptide is Lipid II flippase Amj (Bacillus subtilis (strain 168)).